A 726-amino-acid chain; its full sequence is Serine/threonine-protein kinase PKH3 (726 aa).

The Protein kinase domain maps to 10 to 271 (FLFREELGHG…LEQIKKHKWF (262 aa)). Residues 16–24 (LGHGSYSTV) and K39 each bind ATP. The Proton acceptor role is filled by D136. A disordered region spans residues 629 to 679 (QDIPLPSPAKSSSNSGVSEPISKIPPRQLVSASEQSHKAKSEAHTKKANSY). Residues 663–673 (QSHKAKSEAHT) are compositionally biased toward basic and acidic residues.

The protein belongs to the protein kinase superfamily. Ser/Thr protein kinase family.

It carries out the reaction L-seryl-[protein] + ATP = O-phospho-L-seryl-[protein] + ADP + H(+). The catalysed reaction is L-threonyl-[protein] + ATP = O-phospho-L-threonyl-[protein] + ADP + H(+). In terms of biological role, serine/threonine-protein kinase. This is Serine/threonine-protein kinase PKH3 (PKH3) from Eremothecium gossypii (strain ATCC 10895 / CBS 109.51 / FGSC 9923 / NRRL Y-1056) (Yeast).